Here is a 376-residue protein sequence, read N- to C-terminus: Erythronate-4-phosphate dehydrogenase (376 aa).

Residues Ser-45 and Thr-67 each contribute to the substrate site. Residues Asp-147, 209–211 (ASR), and Asp-235 each bind NAD(+). Arg-211 is a catalytic residue. The active site involves Glu-240. Catalysis depends on His-257, which acts as the Proton donor. Residue Gly-260 participates in NAD(+) binding. Substrate is bound at residue Tyr-261.

It belongs to the D-isomer specific 2-hydroxyacid dehydrogenase family. PdxB subfamily. Homodimer.

The protein resides in the cytoplasm. The enzyme catalyses 4-phospho-D-erythronate + NAD(+) = (R)-3-hydroxy-2-oxo-4-phosphooxybutanoate + NADH + H(+). The protein operates within cofactor biosynthesis; pyridoxine 5'-phosphate biosynthesis; pyridoxine 5'-phosphate from D-erythrose 4-phosphate: step 2/5. Its function is as follows. Catalyzes the oxidation of erythronate-4-phosphate to 3-hydroxy-2-oxo-4-phosphonooxybutanoate. In Aeromonas hydrophila subsp. hydrophila (strain ATCC 7966 / DSM 30187 / BCRC 13018 / CCUG 14551 / JCM 1027 / KCTC 2358 / NCIMB 9240 / NCTC 8049), this protein is Erythronate-4-phosphate dehydrogenase.